The sequence spans 116 residues: Nicotine metabolites export pump subunit NepA (116 aa).

Helical transmembrane passes span 10-30 (LTIW…TSLL), 42-62 (TVAV…ILKF), 67-87 (IAYA…GVLF), and 92-112 (FSWK…TLNL).

It belongs to the drug/metabolite transporter (DMT) superfamily. Small multidrug resistance (SMR) (TC 2.A.7.1) family. NepA/NepB subfamily. As to quaternary structure, the efflux pump is composed of NepA and NepB.

It localises to the cell membrane. Its function is as follows. Component of an efflux pump responsible for the transport of nicotine breakdown products, in particular methylamine, out of the cell. This pump apparently serves as a metabolic valve for nicotine catabolites and may protect the bacteria from the potentially toxic side effects of these compounds. The sequence is that of Nicotine metabolites export pump subunit NepA (nepA) from Paenarthrobacter nicotinovorans (Arthrobacter nicotinovorans).